The primary structure comprises 139 residues: Endoribonuclease YbeY (139 aa).

3 residues coordinate Zn(2+): H99, H103, and H109.

It belongs to the endoribonuclease YbeY family. It depends on Zn(2+) as a cofactor.

The protein localises to the cytoplasm. Single strand-specific metallo-endoribonuclease involved in late-stage 70S ribosome quality control and in maturation of the 3' terminus of the 16S rRNA. The polypeptide is Endoribonuclease YbeY (Sulfurimonas denitrificans (strain ATCC 33889 / DSM 1251) (Thiomicrospira denitrificans (strain ATCC 33889 / DSM 1251))).